Consider the following 150-residue polypeptide: Large ribosomal subunit protein bL9 (150 aa).

This sequence belongs to the bacterial ribosomal protein bL9 family.

In terms of biological role, binds to the 23S rRNA. This is Large ribosomal subunit protein bL9 from Arthrobacter sp. (strain FB24).